The sequence spans 190 residues: Carbonic anhydrase 2 (190 aa).

This sequence belongs to the beta-class carbonic anhydrase family. In terms of assembly, homohexamer.

Its subcellular location is the cytoplasm. It catalyses the reaction hydrogencarbonate + H(+) = CO2 + H2O. In terms of biological role, reversible hydration of carbon dioxide. This Flaveria linearis (Narrowleaf yellowtops) protein is Carbonic anhydrase 2.